Here is a 377-residue protein sequence, read N- to C-terminus: N5-carboxyaminoimidazole ribonucleotide synthase (377 aa).

ATP-binding positions include Arg-93, Lys-133, Gly-138–Gln-144, Glu-175–Val-178, Glu-183, His-206, and Asn-257–Glu-258. The 191-residue stretch at Lys-97–Cys-287 folds into the ATP-grasp domain.

Belongs to the PurK/PurT family. Homodimer.

It catalyses the reaction 5-amino-1-(5-phospho-beta-D-ribosyl)imidazole + hydrogencarbonate + ATP = 5-carboxyamino-1-(5-phospho-D-ribosyl)imidazole + ADP + phosphate + 2 H(+). Its pathway is purine metabolism; IMP biosynthesis via de novo pathway; 5-amino-1-(5-phospho-D-ribosyl)imidazole-4-carboxylate from 5-amino-1-(5-phospho-D-ribosyl)imidazole (N5-CAIR route): step 1/2. Catalyzes the ATP-dependent conversion of 5-aminoimidazole ribonucleotide (AIR) and HCO(3)(-) to N5-carboxyaminoimidazole ribonucleotide (N5-CAIR). In Vibrio cholerae serotype O1 (strain ATCC 39315 / El Tor Inaba N16961), this protein is N5-carboxyaminoimidazole ribonucleotide synthase.